The sequence spans 91 residues: RNA-binding protein Hfq (91 aa).

The region spanning 9–68 (DPYLNALRRERIPVSIYLVNGIKLQGQIESFDQFVILLKNTVNQMVYKHAISTVVPARSV) is the Sm domain. The tract at residues 69-91 (SHHNNNHHTAPTEAVENVETQAE) is disordered.

The protein belongs to the Hfq family. As to quaternary structure, homohexamer.

Its function is as follows. RNA chaperone that binds small regulatory RNA (sRNAs) and mRNAs to facilitate mRNA translational regulation in response to envelope stress, environmental stress and changes in metabolite concentrations. Also binds with high specificity to tRNAs. This is RNA-binding protein Hfq from Haemophilus influenzae (strain ATCC 51907 / DSM 11121 / KW20 / Rd).